Consider the following 252-residue polypeptide: MDERDALRISREIAGEVRKAIASMPLRERVKDVGMGKDGTPTKAADRVAEDAALEILRKERVTVVTEESGVLGEGDVFVALDPLDGTFNATRGIPVYSVSLCFSYSDKLKDAFFGYVYNLATGDEYYADSSGAYRNGERIEVSDAEELYCNAIIYYPDRKFPFKRMRIFGSAATELCFFADGSFDCFLDIRPGKMLRIYDAAAGVFIAEKAGGKVTELDGESLGNKKFDMQERLNIVAANEKLHPKLLELIK.

Mg(2+)-binding residues include aspartate 38, threonine 40, glutamate 67, aspartate 82, leucine 84, and aspartate 85. Residues 85 to 87 (DGT), arginine 167, alanine 172, and arginine 191 each bind substrate. Aspartate 200 contacts Mg(2+).

This sequence belongs to the inositol monophosphatase superfamily. FBPase class 4 family. As to quaternary structure, homodimer. Mg(2+) is required as a cofactor. It depends on Mn(2+) as a cofactor.

It catalyses the reaction beta-D-fructose 1,6-bisphosphate + H2O = beta-D-fructose 6-phosphate + phosphate. The catalysed reaction is a myo-inositol phosphate + H2O = myo-inositol + phosphate. Its activity is regulated as follows. Both FBPase and IMPase activities are inhibited by Ca(2+). In contrast to mammalian I-1-P phosphatases, is only very weakly inhibited by Li(+) (with an IC(50) of about 290 mM). Functionally, phosphatase with broad specificity; it can dephosphorylate fructose 1,6-bisphosphate, both D and L isomers of inositol-1-phosphate (I-1-P), 2'-AMP, pNPP, inositol-2-phosphate, beta-glycerol phosphate, and alpha-D-glucose-1-phosphate. Cannot hydrolyze glucose-6-phosphate and fructose-6-phosphate. May be involved in the biosynthesis of a unique osmolyte, di-myo-inositol 1,1-phosphate. This Archaeoglobus fulgidus (strain ATCC 49558 / DSM 4304 / JCM 9628 / NBRC 100126 / VC-16) protein is Fructose-1,6-bisphosphatase/inositol-1-monophosphatase (suhB).